The primary structure comprises 399 residues: Elongation factor Tu (399 aa).

A tr-type G domain is found at 10-204 (KPHVNIGTIG…AVDANIPEPV (195 aa)). Residues 19-26 (GHVDHGKT) form a G1 region. 19–26 (GHVDHGKT) provides a ligand contact to GTP. Thr-26 provides a ligand contact to Mg(2+). The G2 stretch occupies residues 60–64 (GITIN). The interval 81-84 (DCPG) is G3. GTP-binding positions include 81–85 (DCPGH) and 136–139 (NKCD). The interval 136–139 (NKCD) is G4. The tract at residues 174–176 (SGL) is G5.

This sequence belongs to the TRAFAC class translation factor GTPase superfamily. Classic translation factor GTPase family. EF-Tu/EF-1A subfamily. Monomer.

The protein resides in the cytoplasm. The enzyme catalyses GTP + H2O = GDP + phosphate + H(+). Functionally, GTP hydrolase that promotes the GTP-dependent binding of aminoacyl-tRNA to the A-site of ribosomes during protein biosynthesis. The protein is Elongation factor Tu of Synechococcus sp. (strain RCC307).